A 257-amino-acid polypeptide reads, in one-letter code: 2,3,4,5-tetrahydropyridine-2,6-dicarboxylate N-acetyltransferase (257 aa).

This sequence belongs to the transferase hexapeptide repeat family. DapH subfamily.

It carries out the reaction (S)-2,3,4,5-tetrahydrodipicolinate + acetyl-CoA + H2O = L-2-acetamido-6-oxoheptanedioate + CoA. It functions in the pathway amino-acid biosynthesis; L-lysine biosynthesis via DAP pathway; LL-2,6-diaminopimelate from (S)-tetrahydrodipicolinate (acetylase route): step 1/3. Catalyzes the transfer of an acetyl group from acetyl-CoA to tetrahydrodipicolinate. In Lactococcus lactis subsp. cremoris (strain SK11), this protein is 2,3,4,5-tetrahydropyridine-2,6-dicarboxylate N-acetyltransferase.